We begin with the raw amino-acid sequence, 111 residues long: UPF0375 protein ule-4 (111 aa).

The N-terminal stretch at 1–18 (MNSRLVLLLAVSVALVSA) is a signal peptide. Asn23 and Asn58 each carry an N-linked (GlcNAc...) asparagine glycan.

Belongs to the UPF0375 family.

The protein resides in the secreted. This is UPF0375 protein ule-4 from Caenorhabditis elegans.